Here is a 392-residue protein sequence, read N- to C-terminus: MKKVILIKYGEIALKGKNRHLFESSIIENIRLAIGEGAPPIEQCRGRLYLQLTTEKDISCYREALKRVFGVVGFALAYRLNLEINLEEMEEVLIKHLRKLESKSLAFRVDTRRTVKSFPMDSMEINKKLGALILQHFPKWQVNLNNPELTIFIEVRDEGLFIYTTEDHEDGLGGLPVGVGGRGLLLLSGGIDSPVAGWTLLKRGMMIDAVYFHSFPYTGEKAKEKVIDLARVLTSWKLRAINLHIPYFTKIQETVNKMCPESTWTIIHRRFMMRIAEKLTKSTYHTLITGENLGQVASQTIQNIAVINQATNLPILRPLISFDKNDIIKIAEKIGTFRISKRPYEDCCALFAPKNPETKAKEEAILKAEENLPLNELINEALEKMETLRIKN.

The 108-residue stretch at 59 to 166 folds into the THUMP domain; sequence SCYREALKRV…DEGLFIYTTE (108 aa). ATP is bound by residues 186 to 187, 211 to 212, Arg269, Gly290, and Gln299; these read LL and YF.

It belongs to the ThiI family.

It is found in the cytoplasm. The catalysed reaction is [ThiI sulfur-carrier protein]-S-sulfanyl-L-cysteine + a uridine in tRNA + 2 reduced [2Fe-2S]-[ferredoxin] + ATP + H(+) = [ThiI sulfur-carrier protein]-L-cysteine + a 4-thiouridine in tRNA + 2 oxidized [2Fe-2S]-[ferredoxin] + AMP + diphosphate. It catalyses the reaction [ThiS sulfur-carrier protein]-C-terminal Gly-Gly-AMP + S-sulfanyl-L-cysteinyl-[cysteine desulfurase] + AH2 = [ThiS sulfur-carrier protein]-C-terminal-Gly-aminoethanethioate + L-cysteinyl-[cysteine desulfurase] + A + AMP + 2 H(+). It participates in cofactor biosynthesis; thiamine diphosphate biosynthesis. In terms of biological role, catalyzes the ATP-dependent transfer of a sulfur to tRNA to produce 4-thiouridine in position 8 of tRNAs, which functions as a near-UV photosensor. Also catalyzes the transfer of sulfur to the sulfur carrier protein ThiS, forming ThiS-thiocarboxylate. This is a step in the synthesis of thiazole, in the thiamine biosynthesis pathway. The sulfur is donated as persulfide by IscS. This is Probable tRNA sulfurtransferase from Coxiella burnetii (strain RSA 493 / Nine Mile phase I).